A 637-amino-acid chain; its full sequence is MNTGIIDLFDNHVDSIPTILPHQLATLDYLVRTIIDENRSVLLFHIMGSGKTIIALLFALVASRFKKVYILVPNINILKIFNYNMGVAMNLFNDEFIAENIFIHSTTSFYSLNYNDNVINYNGLSRYNNSIFIVDEAHNIFGNNTGELMTVIKNKNKIPFLLLSGSPITNTPNTLGHIIDLMSEETIDFGEIISRGKKVIQTLLNERGVNVLKDLLKGRISYYEMPDKDLPTIRYHGRKFLDTRVVYCHMSKLQEKDYMITRRQLCYHEMFDKNMYNVSMAVLGQLNLMNNLDTLFQEQDKELYPNLKINNGVLYGEELVTLNISSKFKYFINRIQTLKGKHFIYFSNSTYGGLVIKYIMLSNGYSEYNGSQGTNPHMINGKPKTFAIVTSKMKSSLEDLLDVYNSPENDDGNQLMFLFSSNIMSESYTLKEVRHIWFMTIPDTFSQYNQILGRSIRKFSYVDISEPVNVYLLAAVYSDFNDEVTSLNDYTQDELINVLPFDIKKLLYLKFKTKETNRIYSILQEMSETYSLPPHPSIVKVLLGELVRQFFYNNSRIKYNDSKLLKMVTSVIKNKEDARNYIDDIVNGHFFVSNKVFDKSLLYKYKNDIITVPFRLSYEPFVWGVNFRKEYNVVSSP.

The protein belongs to the helicase family. VETF subfamily. As to quaternary structure, heterodimer of a 70 kDa and a 82 kDa subunit. Part of the early transcription complex composed of ETF, RAP94/OPG109, and the DNA-directed RNA polymerase. Post-translationally, apparently non-glycosylated.

The protein resides in the virion. In terms of biological role, acts with RNA polymerase to initiate transcription from early gene promoters. Is recruited by the RPO-associated protein of 94 kDa RAP94/OPG109 to form the early transcription complex, which also contains the core RNA polymerase. ETF heterodimer binds to early gene promoters. This chain is Early transcription factor 70 kDa subunit (OPG118), found in Monkeypox virus.